The primary structure comprises 359 residues: 5-formaminoimidazole-4-carboxamide-1-(beta)-D-ribofuranosyl 5'-monophosphate synthetase (359 aa).

5-amino-1-(5-phospho-beta-D-ribosyl)imidazole-4-carboxamide-binding residues include His-28 and Ser-95. The ATP-grasp domain maps to 115–346 (ELMIWETDRD…MGRRIAREIK (232 aa)). ATP contacts are provided by residues 144-206 (PEEI…ANIY) and Glu-228. Residue Asn-256 participates in 5-amino-1-(5-phospho-beta-D-ribosyl)imidazole-4-carboxamide binding. The Mg(2+) site is built by Glu-295 and Glu-308.

The protein belongs to the phosphohexose mutase family. Mg(2+) serves as cofactor. Requires Mn(2+) as cofactor.

It carries out the reaction 5-amino-1-(5-phospho-beta-D-ribosyl)imidazole-4-carboxamide + formate + ATP = 5-formamido-1-(5-phospho-D-ribosyl)imidazole-4-carboxamide + ADP + phosphate. It functions in the pathway purine metabolism; IMP biosynthesis via de novo pathway; 5-formamido-1-(5-phospho-D-ribosyl)imidazole-4-carboxamide from 5-amino-1-(5-phospho-D-ribosyl)imidazole-4-carboxamide (formate route): step 1/1. Its function is as follows. Catalyzes the ATP- and formate-dependent formylation of 5-aminoimidazole-4-carboxamide-1-beta-d-ribofuranosyl 5'-monophosphate (AICAR) to 5-formaminoimidazole-4-carboxamide-1-beta-d-ribofuranosyl 5'-monophosphate (FAICAR) in the absence of folates. This Archaeoglobus fulgidus (strain ATCC 49558 / DSM 4304 / JCM 9628 / NBRC 100126 / VC-16) protein is 5-formaminoimidazole-4-carboxamide-1-(beta)-D-ribofuranosyl 5'-monophosphate synthetase.